We begin with the raw amino-acid sequence, 362 residues long: Homoserine O-acetyltransferase FUB5 (362 aa).

Positions 12-335 constitute an AB hydrolase-1 domain; the sequence is NVMIICHALS…VSDDGHDAFL (324 aa). S110 acts as the Nucleophile in catalysis. The interval 195–232 is disordered; that stretch reads RFGRDTGNKKKTQQQDSKTIPNNGTPIHSQGGADETPV. Polar residues predominate over residues 208-222; the sequence is QQDSKTIPNNGTPIH. Residues D302 and H331 contribute to the active site.

It belongs to the AB hydrolase superfamily. MetX family.

The catalysed reaction is L-homoserine + acetyl-CoA = O-acetyl-L-homoserine + CoA. It functions in the pathway mycotoxin biosynthesis. Homoserine O-acetyltransferase; part of the gene cluster that mediates the biosynthesis of fusaric acid, a mycotoxin with low to moderate toxicity to animals and humans, but with high phytotoxic properties. L-aspartate is suggested as fusaric acid amino acid precursor that is activated and further processed to O-acetyl-L-homoserine by cluster enzymes aspartate kinase FUB3 and homoserine O-acetyltransferase FUB5, as well as enzymes of the primary metabolism. The polyketide synthase (PKS) FUB1 generates the triketide trans-2-hexenal which is presumptively released by the hydrolase FUB4 and linked to the NRPS-bound amino acid precursor by NAD(P)-dependent dehydrogenase FUB6. FUB1, FUB4, and the non-canonical NRPS Fub8 may form an enzyme complex. Further processing of the NRPS-bound intermediate might be carried out by FUB6 and the O-acetylhomoserine FUB7, enabling a spontaneous electrocyclization to close the carbon backbone of fusaric acid. Dihydrofusaric acid is likely to be released via reduction by the thioester reductase (TR) domain of FUB8 whereupon the final oxidation to fusaric acid may (also) be performed by the FMN-dependent dehydrogenase FUB9. In Fusarium oxysporum f. sp. lycopersici (strain 4287 / CBS 123668 / FGSC 9935 / NRRL 34936) (Fusarium vascular wilt of tomato), this protein is Homoserine O-acetyltransferase FUB5.